The sequence spans 410 residues: Meiotic driver wtf18 (410 aa).

Positions 1 to 39 (MKNKGYPLRSSMDELSTKNDNEIDLEKGPLPEYNSEDGS) are disordered. Basic and acidic residues predominate over residues 11–29 (SMDELSTKNDNEIDLEKGP). 10 helical membrane passes run 89-109 (LLISVLAVIVVFFTAWVCVNP), 119-139 (AFFVTIGITCPILLITIFCFF), 149-169 (CIKVTVIFLAQCVKVTAVFLA), 174-194 (VTAVFLAKCVKVTAVFLAKCI), 204-224 (CVKVTAVFLAKCVKVIAVGLY), 229-249 (DLVVTIWLAWVVICFILFGCV), 265-285 (CSISAALFFILLLVCIPIWTL), 289-309 (LFGLFQVLGVQSCVVIVTKGL), 319-339 (ATGYEIEASSLFVIGNFLFFY), and 353-373 (FIGNGIASFLGGLGNAFGGIG).

This sequence belongs to the WTF family. As to quaternary structure, homomer. Forms protein aggregates. The two isoforms can interact with each other and with themselves. High sequence similarity is required for their interaction.

It localises to the spore membrane. Its subcellular location is the vacuole membrane. The protein resides in the ascus epiplasm. It is found in the cytoplasm. The protein localises to the endoplasmic reticulum membrane. In terms of biological role, promotes unequal transmission of alleles from the parental zygote to progeny spores by acting as poison/antidote system where the poison and antidote proteins are produced from the same locus; the poison component is trans-acting and targets all spores within an ascus whereas the antidote component is spore-specific, leading to poisoning of all progeny that do not inherit the allele. Functionally, localizes isoform 2 to the vacuole thereby facilitating its degradation. In addition to suppressing isoform 2, also suppresses S.pombe strain 972 wtf13 isoform 2. Its function is as follows. Forms toxic aggregates that disrupt spore maturation. The sequence is that of Meiotic driver wtf18 from Schizosaccharomyces pombe (Fission yeast).